The chain runs to 210 residues: Outer-membrane lipoprotein carrier protein (210 aa).

The N-terminal stretch at 1–23 (MKKRIQKTILTVLFSSLSSIAFA) is a signal peptide.

The protein belongs to the LolA family. Monomer.

It is found in the periplasm. Its function is as follows. Participates in the translocation of lipoproteins from the inner membrane to the outer membrane. Only forms a complex with a lipoprotein if the residue after the N-terminal Cys is not an aspartate (The Asp acts as a targeting signal to indicate that the lipoprotein should stay in the inner membrane). The protein is Outer-membrane lipoprotein carrier protein of Haemophilus ducreyi (strain 35000HP / ATCC 700724).